The following is a 393-amino-acid chain: Chorismate synthase (393 aa).

NADP(+) is bound by residues Arg48 and Arg54. Residues Arg125–Ser127, Asn238–Ala239, Gly278, Lys293–Ser297, and Arg319 contribute to the FMN site. Residues Ala355–Ala393 are disordered.

It belongs to the chorismate synthase family. Homotetramer. The cofactor is FMNH2.

It carries out the reaction 5-O-(1-carboxyvinyl)-3-phosphoshikimate = chorismate + phosphate. The protein operates within metabolic intermediate biosynthesis; chorismate biosynthesis; chorismate from D-erythrose 4-phosphate and phosphoenolpyruvate: step 7/7. Its function is as follows. Catalyzes the anti-1,4-elimination of the C-3 phosphate and the C-6 proR hydrogen from 5-enolpyruvylshikimate-3-phosphate (EPSP) to yield chorismate, which is the branch point compound that serves as the starting substrate for the three terminal pathways of aromatic amino acid biosynthesis. This reaction introduces a second double bond into the aromatic ring system. This chain is Chorismate synthase, found in Nitrosospira multiformis (strain ATCC 25196 / NCIMB 11849 / C 71).